A 113-amino-acid chain; its full sequence is Small ribosomal subunit protein uS17 (113 aa).

Belongs to the universal ribosomal protein uS17 family. Part of the 30S ribosomal subunit.

Its function is as follows. One of the primary rRNA binding proteins, it binds specifically to the 5'-end of 16S ribosomal RNA. In Sulfurisphaera tokodaii (strain DSM 16993 / JCM 10545 / NBRC 100140 / 7) (Sulfolobus tokodaii), this protein is Small ribosomal subunit protein uS17.